Reading from the N-terminus, the 305-residue chain is GTPase Era (305 aa).

The Era-type G domain maps to Arg-11 to Glu-181. The interval Gly-19 to Ser-26 is G1. GTP is bound at residue Gly-19 to Ser-26. The tract at residues Glu-45–His-49 is G2. A G3 region spans residues Asp-66–Gly-69. Residues Asp-66–Leu-70 and Thr-130–Asp-133 each bind GTP. The tract at residues Thr-130–Asp-133 is G4. Residues Val-160–Ala-162 are G5. One can recognise a KH type-2 domain in the interval Leu-212–Lys-291.

The protein belongs to the TRAFAC class TrmE-Era-EngA-EngB-Septin-like GTPase superfamily. Era GTPase family. Monomer.

The protein resides in the cytoplasm. The protein localises to the cell membrane. Its function is as follows. An essential GTPase that binds both GDP and GTP, with rapid nucleotide exchange. Plays a role in 16S rRNA processing and 30S ribosomal subunit biogenesis and possibly also in cell cycle regulation and energy metabolism. The chain is GTPase Era from Corynebacterium diphtheriae (strain ATCC 700971 / NCTC 13129 / Biotype gravis).